The sequence spans 175 residues: NADH-ubiquinone oxidoreductase chain 6 (175 aa).

5 helical membrane-spanning segments follow: residues 1 to 21 (MMTYIVFILSIIFVISFVGFS), 25 to 45 (SPIYGGLVLIISGAVGCGIVL), 47 to 67 (FGGSFLGLMVFLIYLGGMLVV), 88 to 108 (AVLGAFVMGLLSELLLACYIL), and 149 to 169 (YGTWLVIVTGWSLFIGVLVIM).

Belongs to the complex I subunit 6 family. In terms of assembly, core subunit of respiratory chain NADH dehydrogenase (Complex I) which is composed of 45 different subunits.

The protein localises to the mitochondrion inner membrane. It carries out the reaction a ubiquinone + NADH + 5 H(+)(in) = a ubiquinol + NAD(+) + 4 H(+)(out). Functionally, core subunit of the mitochondrial membrane respiratory chain NADH dehydrogenase (Complex I) which catalyzes electron transfer from NADH through the respiratory chain, using ubiquinone as an electron acceptor. Essential for the catalytic activity and assembly of complex I. The polypeptide is NADH-ubiquinone oxidoreductase chain 6 (MT-ND6) (Halichoerus grypus (Gray seal)).